Consider the following 250-residue polypeptide: NAD-dependent protein deacetylase 2 (250 aa).

The region spanning 4-250 (MDSKNLFKKA…LRNIWNLIKS (247 aa)) is the Deacetylase sirtuin-type domain. The NAD(+) site is built by Ala-29, Thr-33, Phe-40, Arg-41, Gln-107, Ile-109, Asp-110, and His-125. A nicotinamide-binding site is contributed by Phe-40. 2 residues coordinate nicotinamide: Ile-109 and Asp-110. His-125 (proton acceptor) is an active-site residue. The Zn(2+) site is built by Cys-133, Cys-136, Cys-158, and Cys-161. NAD(+) contacts are provided by Ser-198, Ser-199, and Asn-219.

The protein belongs to the sirtuin family. Class U subfamily. Zn(2+) serves as cofactor.

It localises to the cytoplasm. The catalysed reaction is N(6)-acetyl-L-lysyl-[protein] + NAD(+) + H2O = 2''-O-acetyl-ADP-D-ribose + nicotinamide + L-lysyl-[protein]. Its function is as follows. NAD-dependent protein deacetylase which modulates the activities of several enzymes which are inactive in their acetylated form. The chain is NAD-dependent protein deacetylase 2 from Caldanaerobacter subterraneus subsp. tengcongensis (strain DSM 15242 / JCM 11007 / NBRC 100824 / MB4) (Thermoanaerobacter tengcongensis).